A 305-amino-acid polypeptide reads, in one-letter code: Dioxygenase hkm4 (305 aa).

Histidine 140, aspartate 142, and histidine 216 together coordinate Fe cation.

Belongs to the PhyH family. Fe cation is required as a cofactor.

It functions in the pathway secondary metabolite biosynthesis. In terms of biological role, dioxygenase; part of the gene cluster that mediates the biosynthesis of hancockiamides, an unusual new family of N-cinnamoylated piperazines. The NRPS hkm10 and the NmrA-like reductase hkm9 are proposed to convert two molecules of L-Phe to the intermediary piperazine called xenocockiamide A. Xenocockiamide A is then converted to hancockiamide D via a series of hydroxylations and O-methylations. The tyrosinase hkm6 may catalyze an aromatic hydroxylation, then the 2-oxoglutarate-dependent Fe(II) dioxygenase hkm4 and the FAD-dependent phenol hydroxylase hkm7 may catalyze consecutive hydroxylations to install 2 more hydroxy groups, and the methyltransferase hkm8 probably catalyzes two methylations using 2 molecules of S-adenosyl-L-methionine (SAM). The NRPS hkm11 activates and transfers trans-cinnamate supplied by the PAL hkm12 to hancockiamide D and produces hancockiamide A. NRPS Hkm11 has the flexibility to tolerate the bulky hancockiamide G as a substrate and the absence of the acetyl-transferase hkm3 opens up the opportunity for hkm11 to introduce a second N-cinnamoyl moiety. The cytochrome P450 monooxygenase hkm5 catalyzes the methylenedioxy bridge formation, converting hancockiamide A into hancockiamide G. Hkm5 can also convert hancockiamide B into hancockiamide C, and hancockiamide D into hancockiamide H. The N-acetyltransferase hkm3 finally transfers an acetyl group to 1-N of piperazine, converting hancockiamide A into hancockiamide B and hancockiamide G into hancockiamide C. In Aspergillus hancockii, this protein is Dioxygenase hkm4.